Here is a 266-residue protein sequence, read N- to C-terminus: Undecaprenyl-diphosphatase (266 aa).

8 consecutive transmembrane segments (helical) span residues 1 to 21 (MVVILAIVEGITEFLPISSTG), 43 to 63 (FLIIIQLGAIFSVVVYFWKDI), 81 to 101 (LKIIVGVLPAMVIGLLLDDII), 109 to 129 (VLIVAITLIAYGVIFIGIEVV), 159 to 179 (LAMIPGTSRSGATIIGALLLG), 183 to 203 (PLAAEFSFYLAIPTMFGATAL), 219 to 239 (YLALGSAIAFVVAYIVIKWFM), and 246 to 266 (SFASFGLYRIILGIIVIVLLY).

Belongs to the UppP family.

The protein localises to the cell inner membrane. The catalysed reaction is di-trans,octa-cis-undecaprenyl diphosphate + H2O = di-trans,octa-cis-undecaprenyl phosphate + phosphate + H(+). Its function is as follows. Catalyzes the dephosphorylation of undecaprenyl diphosphate (UPP). Confers resistance to bacitracin. This Fusobacterium nucleatum subsp. nucleatum (strain ATCC 25586 / DSM 15643 / BCRC 10681 / CIP 101130 / JCM 8532 / KCTC 2640 / LMG 13131 / VPI 4355) protein is Undecaprenyl-diphosphatase.